We begin with the raw amino-acid sequence, 102 residues long: Integration host factor subunit alpha (102 aa).

The segment at 49–71 (FGNFQLRTKPQRPGRNPKTGEEI) is disordered.

It belongs to the bacterial histone-like protein family. As to quaternary structure, heterodimer of an alpha and a beta chain.

Its function is as follows. This protein is one of the two subunits of integration host factor, a specific DNA-binding protein that functions in genetic recombination as well as in transcriptional and translational control. The sequence is that of Integration host factor subunit alpha from Nitrosomonas eutropha (strain DSM 101675 / C91 / Nm57).